The primary structure comprises 308 residues: Ornithine carbamoyltransferase (308 aa).

Residues Ser56 to Thr59, Gln83, Arg107, and His134 to Gln137 each bind carbamoyl phosphate. L-ornithine-binding positions include Asn165, Asp225, and Ser229–Met230. Residues Cys266–Leu267 and Arg294 contribute to the carbamoyl phosphate site.

This sequence belongs to the aspartate/ornithine carbamoyltransferase superfamily. OTCase family.

It is found in the cytoplasm. It catalyses the reaction carbamoyl phosphate + L-ornithine = L-citrulline + phosphate + H(+). It functions in the pathway amino-acid biosynthesis; L-arginine biosynthesis; L-arginine from L-ornithine and carbamoyl phosphate: step 1/3. Its function is as follows. Reversibly catalyzes the transfer of the carbamoyl group from carbamoyl phosphate (CP) to the N(epsilon) atom of ornithine (ORN) to produce L-citrulline. This is Ornithine carbamoyltransferase from Roseobacter denitrificans (strain ATCC 33942 / OCh 114) (Erythrobacter sp. (strain OCh 114)).